A 151-amino-acid polypeptide reads, in one-letter code: Ribosome maturation factor RimP (151 aa).

This sequence belongs to the RimP family.

The protein resides in the cytoplasm. Functionally, required for maturation of 30S ribosomal subunits. The protein is Ribosome maturation factor RimP of Mannheimia succiniciproducens (strain KCTC 0769BP / MBEL55E).